A 337-amino-acid polypeptide reads, in one-letter code: Peroxisome biogenesis factor 10 (337 aa).

The Peroxisomal matrix portion of the chain corresponds to 1–24 (MKNDNKLQKEALMRLSQLRFPFAD). Residues 25 to 54 (APSIVQAHQKDEQIQGLLIMKVTELCKLIK) form a helical membrane-spanning segment. Position 55 (Ser55) is a topological domain, cytoplasmic. A helical membrane pass occupies residues 56-77 (QLFVNSYPKELSIFAKLLYLLF). Topologically, residues 78–105 (TTGRRGRTLGEEYVDLTYTNRKGTRLAG) are peroxisomal matrix. Residues 106–138 (RLKMIVFAFAYPLCPYFITKLYKKIMKNNKESK) traverse the membrane as a helical segment. At 139-145 (IEDTESV) the chain is on the cytoplasmic side. Residues 146–166 (AAFCKGLLDFILDVHMTLFYF) traverse the membrane as a helical segment. The Peroxisomal matrix portion of the chain corresponds to 167–202 (KGAFYSISKRIFGMRYVFKHILSKNEANFREEGSQK). The helical transmembrane segment at 203-222 (YKVLGYILLAQNVMKWYPVL) threads the bilayer. Residues 223-337 (TSTLGSWIYG…QPQEILVLRQ (115 aa)) are Cytoplasmic-facing. Zn(2+) contacts are provided by Cys286, Cys289, Cys301, His303, Cys306, Cys309, Cys320, and Cys323. The RING-type zinc finger occupies 286 to 327 (CILCLMNMSDPSCAPCGHLFCWSCLMSWCKERPECPLCRQHC).

Belongs to the pex2/pex10/pex12 family. In terms of assembly, component of the PEX2-PEX10-PEX12 retrotranslocation channel, composed of PEX2, PEX10 and PEX12.

The protein resides in the peroxisome membrane. The enzyme catalyses S-ubiquitinyl-[E2 ubiquitin-conjugating enzyme]-L-cysteine + [acceptor protein]-L-lysine = [E2 ubiquitin-conjugating enzyme]-L-cysteine + N(6)-ubiquitinyl-[acceptor protein]-L-lysine.. It functions in the pathway protein modification; protein ubiquitination. Its activity is regulated as follows. The E3 ubiquitin-protein ligase activity is stimulated by PEX12. E3 ubiquitin-protein ligase component of a retrotranslocation channel required for peroxisome organization by mediating export of the PEX5 receptor from peroxisomes to the cytosol, thereby promoting PEX5 recycling. The retrotranslocation channel is composed of PEX2, PEX10 and PEX12; each subunit contributing transmembrane segments that coassemble into an open channel that specifically allows the passage of PEX5 through the peroxisomal membrane. PEX10 also regulates PEX5 recycling by acting as a E3 ubiquitin-protein ligase. When PEX5 recycling is compromised, PEX10 catalyzes polyubiquitination of PEX5 during its passage through the retrotranslocation channel, leading to its degradation. This is Peroxisome biogenesis factor 10 from Saccharomyces cerevisiae (strain ATCC 204508 / S288c) (Baker's yeast).